Consider the following 363-residue polypeptide: NAD(P)H-quinone oxidoreductase subunit 1, chloroplastic (363 aa).

Helical transmembrane passes span W28–V48, F98–F118, I129–G149, F253–V273, V300–V320, and L336–T356.

The protein belongs to the complex I subunit 1 family. In terms of assembly, NDH is composed of at least 16 different subunits, 5 of which are encoded in the nucleus.

Its subcellular location is the plastid. The protein resides in the chloroplast thylakoid membrane. It carries out the reaction a plastoquinone + NADH + (n+1) H(+)(in) = a plastoquinol + NAD(+) + n H(+)(out). It catalyses the reaction a plastoquinone + NADPH + (n+1) H(+)(in) = a plastoquinol + NADP(+) + n H(+)(out). Its function is as follows. NDH shuttles electrons from NAD(P)H:plastoquinone, via FMN and iron-sulfur (Fe-S) centers, to quinones in the photosynthetic chain and possibly in a chloroplast respiratory chain. The immediate electron acceptor for the enzyme in this species is believed to be plastoquinone. Couples the redox reaction to proton translocation, and thus conserves the redox energy in a proton gradient. The chain is NAD(P)H-quinone oxidoreductase subunit 1, chloroplastic from Phaseolus vulgaris (Kidney bean).